We begin with the raw amino-acid sequence, 491 residues long: Cytochrome P450 2H2 (491 aa).

Residue C436 coordinates heme.

Belongs to the cytochrome P450 family. Heme serves as cofactor.

The protein localises to the endoplasmic reticulum membrane. It localises to the microsome membrane. It catalyses the reaction an organic molecule + reduced [NADPH--hemoprotein reductase] + O2 = an alcohol + oxidized [NADPH--hemoprotein reductase] + H2O + H(+). Functionally, cytochromes P450 are a group of heme-thiolate monooxygenases. In liver microsomes, this enzyme is involved in an NADPH-dependent electron transport pathway. It oxidizes a variety of structurally unrelated compounds, including steroids, fatty acids, and xenobiotics. The sequence is that of Cytochrome P450 2H2 (CYP2H2) from Gallus gallus (Chicken).